Here is a 159-residue protein sequence, read N- to C-terminus: Ribosomal RNA large subunit methyltransferase H (159 aa).

S-adenosyl-L-methionine is bound by residues Leu-76, Gly-108, and 127–132 (LSRLTF).

This sequence belongs to the RNA methyltransferase RlmH family. Homodimer.

It is found in the cytoplasm. It carries out the reaction pseudouridine(1915) in 23S rRNA + S-adenosyl-L-methionine = N(3)-methylpseudouridine(1915) in 23S rRNA + S-adenosyl-L-homocysteine + H(+). Its function is as follows. Specifically methylates the pseudouridine at position 1915 (m3Psi1915) in 23S rRNA. This is Ribosomal RNA large subunit methyltransferase H from Syntrophomonas wolfei subsp. wolfei (strain DSM 2245B / Goettingen).